The sequence spans 1106 residues: Carbamoyl phosphate synthase large chain (1106 aa).

Positions 1-402 (MPRRQDLNSV…ALQKAMRSLE (402 aa)) are carboxyphosphate synthetic domain. Residues R129, R169, G175, G176, E208, I210, E215, G241, V242, H243, Q285, and E299 each contribute to the ATP site. The 196-residue stretch at 133–328 (KGVVERCGAE…IAKIATKLSL (196 aa)) folds into the ATP-grasp 1 domain. Q285, E299, and N301 together coordinate Mg(2+). Mn(2+)-binding residues include Q285, E299, and N301. The oligomerization domain stretch occupies residues 403–550 (QKGSAFSFAR…YHYSSYDRET (148 aa)). Residues 551-953 (EVAPHEKPSV…AFAKAQAAAG (403 aa)) form a carbamoyl phosphate synthetic domain region. Residues 681–872 (ARVLTEAGLR…MAKAAALIGT (192 aa)) form the ATP-grasp 2 domain. ATP-binding residues include R717, K756, L758, E763, G788, I789, H790, S791, Q831, and E843. Mg(2+) contacts are provided by Q831, E843, and N845. Residues Q831, E843, and N845 each coordinate Mn(2+). Positions 954 to 1106 (GPLPTSGSLF…ERAAQEASRD (153 aa)) constitute an MGS-like domain. The interval 954-1106 (GPLPTSGSLF…ERAAQEASRD (153 aa)) is allosteric domain.

Belongs to the CarB family. As to quaternary structure, composed of two chains; the small (or glutamine) chain promotes the hydrolysis of glutamine to ammonia, which is used by the large (or ammonia) chain to synthesize carbamoyl phosphate. Tetramer of heterodimers (alpha,beta)4. Mg(2+) is required as a cofactor. Requires Mn(2+) as cofactor.

The enzyme catalyses hydrogencarbonate + L-glutamine + 2 ATP + H2O = carbamoyl phosphate + L-glutamate + 2 ADP + phosphate + 2 H(+). The catalysed reaction is hydrogencarbonate + NH4(+) + 2 ATP = carbamoyl phosphate + 2 ADP + phosphate + 2 H(+). It participates in amino-acid biosynthesis; L-arginine biosynthesis; carbamoyl phosphate from bicarbonate: step 1/1. Its pathway is pyrimidine metabolism; UMP biosynthesis via de novo pathway; (S)-dihydroorotate from bicarbonate: step 1/3. Its function is as follows. Large subunit of the glutamine-dependent carbamoyl phosphate synthetase (CPSase). CPSase catalyzes the formation of carbamoyl phosphate from the ammonia moiety of glutamine, carbonate, and phosphate donated by ATP, constituting the first step of 2 biosynthetic pathways, one leading to arginine and/or urea and the other to pyrimidine nucleotides. The large subunit (synthetase) binds the substrates ammonia (free or transferred from glutamine from the small subunit), hydrogencarbonate and ATP and carries out an ATP-coupled ligase reaction, activating hydrogencarbonate by forming carboxy phosphate which reacts with ammonia to form carbamoyl phosphate. The protein is Carbamoyl phosphate synthase large chain of Kocuria rhizophila (strain ATCC 9341 / DSM 348 / NBRC 103217 / DC2201).